The sequence spans 170 residues: Ribosome maturation factor RimM (170 aa).

In terms of domain architecture, PRC barrel spans 97–170; that stretch reads HPDEYYWVDL…RIVVDWDPEF (74 aa).

This sequence belongs to the RimM family. In terms of assembly, binds ribosomal protein uS19.

It is found in the cytoplasm. In terms of biological role, an accessory protein needed during the final step in the assembly of 30S ribosomal subunit, possibly for assembly of the head region. Essential for efficient processing of 16S rRNA. May be needed both before and after RbfA during the maturation of 16S rRNA. It has affinity for free ribosomal 30S subunits but not for 70S ribosomes. The protein is Ribosome maturation factor RimM of Xylella fastidiosa (strain M12).